The following is a 236-amino-acid chain: Phosphoribosylaminoimidazole-succinocarboxamide synthase (236 aa).

The protein belongs to the SAICAR synthetase family.

It carries out the reaction 5-amino-1-(5-phospho-D-ribosyl)imidazole-4-carboxylate + L-aspartate + ATP = (2S)-2-[5-amino-1-(5-phospho-beta-D-ribosyl)imidazole-4-carboxamido]succinate + ADP + phosphate + 2 H(+). It functions in the pathway purine metabolism; IMP biosynthesis via de novo pathway; 5-amino-1-(5-phospho-D-ribosyl)imidazole-4-carboxamide from 5-amino-1-(5-phospho-D-ribosyl)imidazole-4-carboxylate: step 1/2. This Lysinibacillus sphaericus (strain C3-41) protein is Phosphoribosylaminoimidazole-succinocarboxamide synthase.